A 601-amino-acid polypeptide reads, in one-letter code: NADH-quinone oxidoreductase subunit C/D (601 aa).

Positions 1 to 192 (MIVPDLVADA…PPYSLTEDQE (192 aa)) are NADH dehydrogenase I subunit C. The tract at residues 216–601 (DFMFLNLGPN…IDFVMADVDR (386 aa)) is NADH dehydrogenase I subunit D.

This sequence in the N-terminal section; belongs to the complex I 30 kDa subunit family. The protein in the C-terminal section; belongs to the complex I 49 kDa subunit family. As to quaternary structure, NDH-1 is composed of 13 different subunits. Subunits NuoB, CD, E, F, and G constitute the peripheral sector of the complex.

It localises to the cell inner membrane. It carries out the reaction a quinone + NADH + 5 H(+)(in) = a quinol + NAD(+) + 4 H(+)(out). Functionally, NDH-1 shuttles electrons from NADH, via FMN and iron-sulfur (Fe-S) centers, to quinones in the respiratory chain. The immediate electron acceptor for the enzyme in this species is believed to be ubiquinone. Couples the redox reaction to proton translocation (for every two electrons transferred, four hydrogen ions are translocated across the cytoplasmic membrane), and thus conserves the redox energy in a proton gradient. In Gluconacetobacter diazotrophicus (strain ATCC 49037 / DSM 5601 / CCUG 37298 / CIP 103539 / LMG 7603 / PAl5), this protein is NADH-quinone oxidoreductase subunit C/D.